The sequence spans 206 residues: uncharacterized protein (206 aa).

The protein localises to the plastid. It is found in the cyanelle. This is an uncharacterized protein from Cyanophora paradoxa.